We begin with the raw amino-acid sequence, 297 residues long: 3-mercaptopyruvate sulfurtransferase (297 aa).

Position 2 is an N-acetylalanine (alanine 2). The Rhodanese 1 domain maps to 25 to 144 (SSQPLKLLDA…WLNQNLPISS (120 aa)). Serine 35 carries the phosphoserine modification. Lysine 40 carries the N6-acetyllysine; alternate modification. Lysine 40 is modified (N6-succinyllysine; alternate). Residues 145 to 160 (GKSHSEPAEFSAQLDP) are hinge. An N6-succinyllysine mark is found at lysine 146 and lysine 164. The region spanning 174–288 (DARRFQVVDA…WYMRAQPEHI (115 aa)) is the Rhodanese 2 domain. Arginine 188 is a binding site for substrate. Catalysis depends on cysteine 248, which acts as the Cysteine persulfide intermediate.

Monomer (active form). Homodimer; disulfide-linked (inactive form). As to expression, expressed in the brain and retina. In the retina, localized to the inner and outer plexiform layer, the inner and outer nuclear layer and the outer segments of photoreceptors. In the brain, localized to neurons of mitral cell layers, glomerular, and external plexiform layers in the olfactory bulb. Also found in Purkinje cell stomata and proximal dendrites. In the spinal cord, localized to large neurons. In the cerebral cortex, localized to pyramidial neurons in layers II/III and V, and in layers I-VI of neocortical areas. In the hippocampus, found in CA1 and CA3 pyramidal cells.

It localises to the cytoplasm. It is found in the mitochondrion. Its subcellular location is the synapse. The protein localises to the synaptosome. The catalysed reaction is 2-oxo-3-sulfanylpropanoate + [thioredoxin]-dithiol = [thioredoxin]-disulfide + hydrogen sulfide + pyruvate + H(+). With respect to regulation, by oxidative stress, and thioredoxin. Under oxidative stress conditions, the catalytic cysteine site is converted to a sulfenate which inhibits the MPST enzyme activity. Reduced thioredoxin cleaves an intersubunit disulfide bond to turn on the redox switch and reactivate the enzyme. Inhibited by different oxidants, hydrogen peroxide and tetrathionate. Transfer of a sulfur ion to cyanide or to other thiol compounds. Also has weak rhodanese activity. Detoxifies cyanide and is required for thiosulfate biosynthesis. Acts as an antioxidant. In combination with cysteine aminotransferase (CAT), contributes to the catabolism of cysteine and is an important producer of hydrogen sulfide in the brain, retina and vascular endothelial cells. Hydrogen sulfide H(2)S is an important synaptic modulator, signaling molecule, smooth muscle contractor and neuroprotectant. Its production by the 3MST/CAT pathway is regulated by calcium ions. The sequence is that of 3-mercaptopyruvate sulfurtransferase (Mpst) from Mus musculus (Mouse).